The chain runs to 322 residues: HPr kinase/phosphorylase (322 aa).

Active-site residues include H146 and K167. Position 161-168 (161-168 (GDSGLGKS)) interacts with ATP. Position 168 (S168) interacts with Mg(2+). D185 functions as the Proton acceptor; for phosphorylation activity. Proton donor; for dephosphorylation activity in the catalytic mechanism. An important for the catalytic mechanism of both phosphorylation and dephosphorylation region spans residues 209 to 218 (LEVRGLGLLD). E210 provides a ligand contact to Mg(2+). R250 is an active-site residue. The important for the catalytic mechanism of dephosphorylation stretch occupies residues 271 to 276 (QVAAGR).

This sequence belongs to the HPrK/P family. As to quaternary structure, homohexamer. Requires Mg(2+) as cofactor.

The catalysed reaction is [HPr protein]-L-serine + ATP = [HPr protein]-O-phospho-L-serine + ADP + H(+). The enzyme catalyses [HPr protein]-O-phospho-L-serine + phosphate + H(+) = [HPr protein]-L-serine + diphosphate. Functionally, catalyzes the ATP- as well as the pyrophosphate-dependent phosphorylation of a specific serine residue in HPr, a phosphocarrier protein of the phosphoenolpyruvate-dependent sugar phosphotransferase system (PTS). HprK/P also catalyzes the pyrophosphate-producing, inorganic phosphate-dependent dephosphorylation (phosphorolysis) of seryl-phosphorylated HPr (P-Ser-HPr). In Burkholderia ambifaria (strain ATCC BAA-244 / DSM 16087 / CCUG 44356 / LMG 19182 / AMMD) (Burkholderia cepacia (strain AMMD)), this protein is HPr kinase/phosphorylase.